The sequence spans 141 residues: Relaxin-3 (141 aa).

The N-terminal stretch at 1 to 24 is a signal peptide; that stretch reads MAMLGLLLLASWALLGALGLQAEA. Cystine bridges form between Cys34–Cys128, Cys46–Cys141, and Cys127–Cys132. Residues 54–117 constitute a propeptide, connecting peptide; it reads ADILAHESLG…GSPGVVRGSR (64 aa).

It belongs to the insulin family. In terms of assembly, heterodimer of a B chain and an A chain linked by two disulfide bonds. High expression in the brain localized to the pons/medulla with highest levels in pars ventromedialis of the dorsal tegmental nucleus. Significant expression is also detected in the spleen, thymus, lung, testis and ovary.

It localises to the secreted. Its function is as follows. May play a role in neuropeptide signaling processes. Ligand for LGR7, relaxin-3 receptor-1 and relaxin-3 receptor-2. The polypeptide is Relaxin-3 (Rln3) (Mus musculus (Mouse)).